A 1353-amino-acid polypeptide reads, in one-letter code: Patatin-like phospholipase domain-containing protein ZK370.4 (1353 aa).

Residues 12-32 (IFLVTFIYNHVLLILFTVCII) form a helical membrane-spanning segment. A compositionally biased stretch (low complexity) spans 49 to 64 (TPSSASSSATPSSRNS). Disordered stretches follow at residues 49–188 (TPSS…STAF) and 199–218 (SRSY…VRPP). Residues 91–123 (SPKSGTPTNTQTIEPPTSLNLNMVNSASGSNLS) are compositionally biased toward polar residues. Basic residues-rich tracts occupy residues 126 to 138 (RRMR…KKLY) and 170 to 184 (PRRR…RRRQ). Residues 245–372 (LKML…VITR), 444–581 (FGLV…VLRR), and 570–692 (IYLP…LGQY) contribute to the a nucleoside 3',5'-cyclic phosphate site. In terms of domain architecture, PNPLA spans 942–1108 (LVLGGGGARG…VNNVPADVMR (167 aa)). Positions 946–951 (GGGARG) match the GXGXXG motif. The short motif at 973 to 977 (GTSIG) is the GXSXG element. The active-site Nucleophile is the Ser-975. Asp-1095 (proton acceptor) is an active-site residue. A DGA/G motif is present at residues 1095–1097 (DGG). Disordered regions lie at residues 1230–1249 (EKET…PDVS), 1274–1293 (SMSL…DHFL), and 1305–1353 (YEEE…PPSS). Over residues 1328 to 1337 (GPPSSSSSGG) the composition is skewed to low complexity.

It belongs to the NTE family.

It is found in the membrane. In Caenorhabditis elegans, this protein is Patatin-like phospholipase domain-containing protein ZK370.4.